Consider the following 500-residue polypeptide: Glycerol kinase (500 aa).

ADP is bound at residue threonine 13. ATP-binding residues include threonine 13, threonine 14, and serine 15. Position 13 (threonine 13) interacts with sn-glycerol 3-phosphate. Arginine 17 provides a ligand contact to ADP. Residues arginine 83, glutamate 84, tyrosine 135, and aspartate 244 each contribute to the sn-glycerol 3-phosphate site. Positions 83, 84, 135, 244, and 245 each coordinate glycerol. Positions 266 and 309 each coordinate ADP. Residues threonine 266, glycine 309, glutamine 313, and glycine 410 each coordinate ATP. Residues glycine 410 and asparagine 414 each contribute to the ADP site.

Belongs to the FGGY kinase family.

It carries out the reaction glycerol + ATP = sn-glycerol 3-phosphate + ADP + H(+). Its pathway is polyol metabolism; glycerol degradation via glycerol kinase pathway; sn-glycerol 3-phosphate from glycerol: step 1/1. Inhibited by fructose 1,6-bisphosphate (FBP). Its function is as follows. Key enzyme in the regulation of glycerol uptake and metabolism. Catalyzes the phosphorylation of glycerol to yield sn-glycerol 3-phosphate. The chain is Glycerol kinase from Burkholderia ambifaria (strain ATCC BAA-244 / DSM 16087 / CCUG 44356 / LMG 19182 / AMMD) (Burkholderia cepacia (strain AMMD)).